The following is a 235-amino-acid chain: Calcium-activated potassium channel subunit beta-2 (235 aa).

Residues 1 to 45 (MFIWTSGRTSSSYRHDEKRNIYQKIRDHDLLDKRKTVTALKAGED) are ball and chain. The Cytoplasmic portion of the chain corresponds to 1 to 46 (MFIWTSGRTSSSYRHDEKRNIYQKIRDHDLLDKRKTVTALKAGEDR). Residues 47-67 (AILLGLAMMVCSIMMYFLLGI) form a helical membrane-spanning segment. Residues 68–194 (TLLRSYMQSV…VILTKLYSSN (127 aa)) are Extracellular-facing. Residues asparagine 88, asparagine 96, and asparagine 119 are each glycosylated (N-linked (GlcNAc...) asparagine). A helical transmembrane segment spans residues 195–215 (VLFHSLFWPTCMMAGGVAIVA). Residues 216–235 (MVKLTQYLSLLCERIQRINR) are Cytoplasmic-facing.

This sequence belongs to the KCNMB (TC 8.A.14.1) family. KCNMB2 subfamily. Interacts with KCNMA1 tetramer. There are probably 4 molecules of KCMNB2 per KCNMA1 tetramer. Post-translationally, N-glycosylated. Expressed in kidney, heart and brain. Highly expressed in ovary. Expressed at low level in other tissues.

It localises to the membrane. In terms of biological role, regulatory subunit of the calcium activated potassium KCNMA1 (maxiK) channel. Modulates the calcium sensitivity and gating kinetics of KCNMA1, thereby contributing to KCNMA1 channel diversity. Acts as a negative regulator that confers rapid and complete inactivation of KCNMA1 channel complex. May participate in KCNMA1 inactivation in chromaffin cells of the adrenal gland or in hippocampal CA1 neurons. This Homo sapiens (Human) protein is Calcium-activated potassium channel subunit beta-2 (KCNMB2).